A 78-amino-acid polypeptide reads, in one-letter code: Keratin-associated protein 6-5 (78 aa).

Residues glycine 3–tyrosine 76 form a 25 X 2 AA repeats of G-[YCGS] region.

It belongs to the KRTAP type 6 family. Interacts with hair keratins. In terms of tissue distribution, strong expression in narrowly defined pattern restricted to the lower and middle cortical regions of the hair shaft in both developing and cycling hair. During hair follicle regression (catagen), expression levels decrease until expression is no longer detectable in follicles at resting stage (telogen).

In terms of biological role, in the hair cortex, hair keratin intermediate filaments are embedded in an interfilamentous matrix, consisting of hair keratin-associated proteins (KRTAP), which are essential for the formation of a rigid and resistant hair shaft through their extensive disulfide bond cross-linking with abundant cysteine residues of hair keratins. The matrix proteins include the high-sulfur and high-glycine-tyrosine keratins. The sequence is that of Keratin-associated protein 6-5 (Krtap6-5) from Mus musculus (Mouse).